A 554-amino-acid chain; its full sequence is Formate--tetrahydrofolate ligase (554 aa).

65–72 is an ATP binding site; the sequence is TPAGEGKT.

The protein belongs to the formate--tetrahydrofolate ligase family.

The catalysed reaction is (6S)-5,6,7,8-tetrahydrofolate + formate + ATP = (6R)-10-formyltetrahydrofolate + ADP + phosphate. It functions in the pathway one-carbon metabolism; tetrahydrofolate interconversion. The protein is Formate--tetrahydrofolate ligase of Petrotoga mobilis (strain DSM 10674 / SJ95).